Reading from the N-terminus, the 429-residue chain is 3-phosphoshikimate 1-carboxyvinyltransferase (429 aa).

3-phosphoshikimate-binding residues include Lys23, Ser24, and Arg28. Lys23 provides a ligand contact to phosphoenolpyruvate. The phosphoenolpyruvate site is built by Gly97 and Arg125. 7 residues coordinate 3-phosphoshikimate: Ser170, Ser171, Gln172, Ser198, Asp314, Asn338, and Lys342. Gln172 contacts phosphoenolpyruvate. The Proton acceptor role is filled by Asp314. 3 residues coordinate phosphoenolpyruvate: Arg346, Arg388, and Lys413.

The protein belongs to the EPSP synthase family. As to quaternary structure, monomer.

It is found in the cytoplasm. The enzyme catalyses 3-phosphoshikimate + phosphoenolpyruvate = 5-O-(1-carboxyvinyl)-3-phosphoshikimate + phosphate. It functions in the pathway metabolic intermediate biosynthesis; chorismate biosynthesis; chorismate from D-erythrose 4-phosphate and phosphoenolpyruvate: step 6/7. Functionally, catalyzes the transfer of the enolpyruvyl moiety of phosphoenolpyruvate (PEP) to the 5-hydroxyl of shikimate-3-phosphate (S3P) to produce enolpyruvyl shikimate-3-phosphate and inorganic phosphate. The protein is 3-phosphoshikimate 1-carboxyvinyltransferase of Pectobacterium atrosepticum (strain SCRI 1043 / ATCC BAA-672) (Erwinia carotovora subsp. atroseptica).